Here is a 133-residue protein sequence, read N- to C-terminus: MKNLSIFLFVVGLCMISDVYGKKSTITVKNELNPKNKNILKVHCKSKNNDIGVKYLKIGEVMSFSFKTNFWGTTEFWCNLYKGPDYKRYRGITAYQAIGLFAKDGSSYNWLARDDGIYFHKDSLPSYYKTYWL.

Residues 1–21 (MKNLSIFLFVVGLCMISDVYG) form the signal peptide.

Belongs to the plant self-incompatibility (S1) protein family.

It is found in the secreted. The sequence is that of S-protein homolog 21 from Arabidopsis thaliana (Mouse-ear cress).